Consider the following 182-residue polypeptide: Ribosome-recycling factor (182 aa).

This sequence belongs to the RRF family.

It localises to the cytoplasm. Functionally, responsible for the release of ribosomes from messenger RNA at the termination of protein biosynthesis. May increase the efficiency of translation by recycling ribosomes from one round of translation to another. This is Ribosome-recycling factor from Gloeothece citriformis (strain PCC 7424) (Cyanothece sp. (strain PCC 7424)).